The sequence spans 283 residues: Agmatinase (283 aa).

A divalent metal cation is bound by residues His-112, Asp-131, His-133, Asp-135, Asp-211, and Asp-213.

Belongs to the arginase family. Agmatinase subfamily. In terms of assembly, homotetramer. The cofactor is a divalent metal cation.

The enzyme catalyses agmatine + H2O = urea + putrescine. The protein operates within amine and polyamine biosynthesis; putrescine biosynthesis via agmatine pathway; putrescine from agmatine: step 1/1. With respect to regulation, inhibited by putrescine. Activity is not affected by arginine and ornithine. Catalyzes the formation of putrescine from agmatine. Cannot use arginine. This chain is Agmatinase, found in Pyrococcus horikoshii (strain ATCC 700860 / DSM 12428 / JCM 9974 / NBRC 100139 / OT-3).